The chain runs to 684 residues: MENLQTNFSLVQGSTKKLNGMGDDGSPPAKKMITDIHANGKTINKVPTVKKEHLDDYGEAPVETDGEHVKRTCTSVPETLHLNPSLKHTLAQFHLSSQSSLGGPAAFSARHSQESMSPTVFLPLPSPQVLPGPLLIPSDSSTELTQTVLEGESISCFQVGGEKRLCLPQVLNSVLREFTLQQINTVCDELYIYCSRCTSDQLHILKVLGILPFNAPSCGLITLTDAQRLCNALLRPRTFPQNGSVLPAKSSLAQLKETGSAFEVEHECLGKCQGLFAPQFYVQPDAPCIQCLECCGMFAPQTFVMHSHRSPDKRTCHWGFESAKWHCYLHVNQKYLGTPEEKKLKIILEEMKEKFSMRSGKRNQSKTDAPSGMELQSWYPVIKQEGDHVSQTHSFLHPSYYLYMCDKVVAPNVSLTSAVSQSKELTKTEASKSISRQSEKAHSSGKLQKTVSYPDVSLEEQEKMDLKTSRELCSRLDASISNNSTSKRKSESATCNLVRDINKVGIGLVAAASSPLLVKDVICEDDKGKIMEEVMRTYLKQQEKLNLILQKKQQLQMEVKMLSSSKSMKELTEEQQNLQKELESLQNEHAQRMEEFYVEQKDLEKKLEQIMKQKCTCDSNLEKDKEAEYAGQLAELRQRLDHAEADRQELQDELRQEREARQKLEMMIKELKLQILKSSKTAKE.

Glycyl lysine isopeptide (Lys-Gly) (interchain with G-Cter in SUMO2) cross-links involve residues lysine 50 and lysine 70. Residues 420-454 (SQSKELTKTEASKSISRQSEKAHSSGKLQKTVSYP) are disordered. Position 452 is a phosphoserine (serine 452). Residues lysine 489 and lysine 527 each participate in a glycyl lysine isopeptide (Lys-Gly) (interchain with G-Cter in SUMO2) cross-link. Residues 536 to 684 (RTYLKQQEKL…ILKSSKTAKE (149 aa)) are a coiled coil.

The protein belongs to the SKI family. In terms of assembly, interacts with CPNE4 (via VWFA domain). Interacts with SMAD2, SMAD3 and RNF111. Isoform 1 interacts with WWP1. Post-translationally, ubiquitinated by RNF111 and ARK2C, promoting proteasomal degradation, leading to enhance the BMP-Smad signaling. In terms of tissue distribution, isoform SNON and isoform SNOA are widely expressed. Highest expression is found in skeletal muscle, followed by placenta and lung. Lowest expression in heart, brain and pancreas. Isoform SNOI expression is restricted to skeletal muscle.

Functionally, may have regulatory role in cell division or differentiation in response to extracellular signals. The sequence is that of Ski-like protein (SKIL) from Homo sapiens (Human).